A 344-amino-acid chain; its full sequence is Cysteine proteinase 5 (344 aa).

Positions 1-17 (MKVLSFLCVLLVSVATA) are cleaved as a signal peptide. Residues 18 to 111 (KQQFSELQYR…TQEEKVFTTS (94 aa)) constitute a propeptide, activation peptide. 3 cysteine pairs are disulfide-bonded: C133/C174, C167/C207, and C265/C333. C136 is an active-site residue. Residue H272 is part of the active site. N297 carries an N-linked (GlcNAc...) asparagine glycan. N311 is a catalytic residue.

It belongs to the peptidase C1 family. Post-translationally, glycosylated; contains GlcNAc-alpha-1-P-Ser residues.

Its subcellular location is the lysosome. The chain is Cysteine proteinase 5 (cprE) from Dictyostelium discoideum (Social amoeba).